The sequence spans 338 residues: Glycerol-3-phosphate dehydrogenase [NAD(P)+] (338 aa).

NADPH is bound by residues Ser-14, Tyr-15, His-35, and Lys-109. Sn-glycerol 3-phosphate-binding residues include Lys-109, Gly-138, and Thr-140. Ala-142 serves as a coordination point for NADPH. Sn-glycerol 3-phosphate is bound by residues Lys-194, Asp-247, Ser-257, Arg-258, and Asn-259. The Proton acceptor role is filled by Lys-194. Arg-258 lines the NADPH pocket. NADPH contacts are provided by Val-282 and Glu-284.

This sequence belongs to the NAD-dependent glycerol-3-phosphate dehydrogenase family.

Its subcellular location is the cytoplasm. It catalyses the reaction sn-glycerol 3-phosphate + NAD(+) = dihydroxyacetone phosphate + NADH + H(+). The catalysed reaction is sn-glycerol 3-phosphate + NADP(+) = dihydroxyacetone phosphate + NADPH + H(+). The protein operates within membrane lipid metabolism; glycerophospholipid metabolism. Functionally, catalyzes the reduction of the glycolytic intermediate dihydroxyacetone phosphate (DHAP) to sn-glycerol 3-phosphate (G3P), the key precursor for phospholipid synthesis. The sequence is that of Glycerol-3-phosphate dehydrogenase [NAD(P)+] from Shewanella baltica (strain OS185).